Consider the following 204-residue polypeptide: Oxidoreductase iacF (204 aa).

This sequence belongs to the oxidoreductase OpS7 family.

Its pathway is secondary metabolite biosynthesis. Oxidoreductase; part of the gene cluster that mediates the biosynthesis of iso-A82775C, a enylepoxycyclohexane and biosynthetic precursor of the chloropestolide anticancer natural products. Within the cluster, the prenyltransferase iacE prenylates siccayne to generate pestalodiol E, using dimethylallyl diphosphate (DMAPP) as cosubstrate. The probable oxidoreductase iacF is then involved in the epoxidation of pestalodiol F to pestalodiol F, which is further converted to pestalofone A by the short-chain dehydrogenase/reductase iacG. Iso-A82775C is subsequently generated from pestalofone A by the short-chain dehydrogenase/reductase iacC. Iso-A82775C is further condensed with maldoxin via a Diels-Alder reaction to produce the anticancer natural products chloropestolides A to E. The chain is Oxidoreductase iacF from Pestalotiopsis fici (strain W106-1 / CGMCC3.15140).